Consider the following 238-residue polypeptide: Large ribosomal subunit protein uL1 (238 aa).

This sequence belongs to the universal ribosomal protein uL1 family. As to quaternary structure, part of the 50S ribosomal subunit.

Binds directly to 23S rRNA. The L1 stalk is quite mobile in the ribosome, and is involved in E site tRNA release. Functionally, protein L1 is also a translational repressor protein, it controls the translation of the L11 operon by binding to its mRNA. The polypeptide is Large ribosomal subunit protein uL1 (Picosynechococcus sp. (strain ATCC 27264 / PCC 7002 / PR-6) (Agmenellum quadruplicatum)).